The primary structure comprises 252 residues: 2,5-diamino-6-ribosylamino-4(3H)-pyrimidinone 5'-phosphate reductase (252 aa).

NADP(+) contacts are provided by residues threonine 80, aspartate 84, valine 166, and 189–193 (GGIVI).

This sequence belongs to the HTP reductase family. Homodimer.

The enzyme catalyses 2,5-diamino-6-(1-D-ribitylamino)pyrimidin-4(3H)-one 5'-phosphate + NADP(+) = 2,5-diamino-6-(1-D-ribosylamino)pyrimidin-4(3H)-one 5'-phosphate + NADPH + H(+). The catalysed reaction is 2,5-diamino-6-(1-D-ribitylamino)pyrimidin-4(3H)-one 5'-phosphate + NAD(+) = 2,5-diamino-6-(1-D-ribosylamino)pyrimidin-4(3H)-one 5'-phosphate + NADH + H(+). Its pathway is cofactor biosynthesis; riboflavin biosynthesis. Catalyzes an early step in riboflavin biosynthesis, the NADPH-dependent reduction of the ribose side chain of 2,5-diamino-6-ribosylamino-4(3H)-pyrimidinone 5'-phosphate, yielding 2,5-diamino-6-ribitylamino-4(3H)-pyrimidinone 5'-phosphate. The protein is 2,5-diamino-6-ribosylamino-4(3H)-pyrimidinone 5'-phosphate reductase (RIB7) of Kluyveromyces lactis (strain ATCC 8585 / CBS 2359 / DSM 70799 / NBRC 1267 / NRRL Y-1140 / WM37) (Yeast).